We begin with the raw amino-acid sequence, 520 residues long: Hydroxymethylglutaryl-CoA synthase, cytoplasmic (520 aa).

A Phosphoserine modification is found at serine 4. (3S)-3-hydroxy-3-methylglutaryl-CoA-binding residues include aspartate 43 and alanine 44. Position 44–46 (44–46 (AGK)) interacts with CoA. At lysine 46 the chain carries N6-acetyllysine. Glutamate 95 serves as the catalytic Proton donor/acceptor. (3S)-3-hydroxy-3-methylglutaryl-CoA is bound by residues cysteine 129, asparagine 167, threonine 171, serine 221, and histidine 264. The active-site Acyl-thioester intermediate is cysteine 129. A CoA-binding site is contributed by asparagine 167. Residue serine 221 coordinates CoA. Histidine 264 (proton donor/acceptor) is an active-site residue. The CoA site is built by lysine 269 and lysine 273. (3S)-3-hydroxy-3-methylglutaryl-CoA is bound by residues lysine 273, asparagine 343, and serine 377. An N6-acetyllysine modification is found at lysine 273. The segment at 487 to 520 (NTATEHIPSPAKKVPRLPATSGEPESAVISNGEH) is disordered. A phosphoserine mark is found at serine 495 and serine 516.

It belongs to the thiolase-like superfamily. HMG-CoA synthase family. Homodimer.

It is found in the cytoplasm. The catalysed reaction is acetoacetyl-CoA + acetyl-CoA + H2O = (3S)-3-hydroxy-3-methylglutaryl-CoA + CoA + H(+). Its pathway is metabolic intermediate biosynthesis; (R)-mevalonate biosynthesis; (R)-mevalonate from acetyl-CoA: step 2/3. Functionally, catalyzes the condensation of acetyl-CoA with acetoacetyl-CoA to form HMG-CoA, which is converted by HMG-CoA reductase (HMGCR) into mevalonate, a precursor for cholesterol synthesis. This chain is Hydroxymethylglutaryl-CoA synthase, cytoplasmic, found in Rattus norvegicus (Rat).